We begin with the raw amino-acid sequence, 440 residues long: Trigger factor (440 aa).

The 86-residue stretch at 163 to 248 folds into the PPIase FKBP-type domain; the sequence is GDTVNIDFDG…INEIKYKNVP (86 aa).

This sequence belongs to the FKBP-type PPIase family. Tig subfamily.

It localises to the cytoplasm. It catalyses the reaction [protein]-peptidylproline (omega=180) = [protein]-peptidylproline (omega=0). Functionally, involved in protein export. Acts as a chaperone by maintaining the newly synthesized protein in an open conformation. Functions as a peptidyl-prolyl cis-trans isomerase. This is Trigger factor from Staphylococcus carnosus (strain TM300).